The sequence spans 284 residues: Tropomyosin (284 aa).

Residues 1–47 (MDAIKKKMQAMKIEKDNAMDRADAAEEKARQQQERVEKLEEELRDTQ) form a disordered region. Positions 1-284 (MDAIKKKMQA…DQTFQELSGY (284 aa)) form a coiled coil. Positions 12–38 (KIEKDNAMDRADAAEEKARQQQERVEK) are enriched in basic and acidic residues.

The protein belongs to the tropomyosin family.

In terms of biological role, tropomyosin, in association with the troponin complex, plays a central role in the calcium dependent regulation of muscle contraction. The chain is Tropomyosin from Trichinella spiralis (Trichina worm).